A 256-amino-acid polypeptide reads, in one-letter code: Thiazole synthase (256 aa).

The active-site Schiff-base intermediate with DXP is the Lys-96. 1-deoxy-D-xylulose 5-phosphate-binding positions include Gly-157, 183 to 184 (AG), and 205 to 206 (NT).

This sequence belongs to the ThiG family. As to quaternary structure, homotetramer. Forms heterodimers with either ThiH or ThiS.

The protein resides in the cytoplasm. It carries out the reaction [ThiS sulfur-carrier protein]-C-terminal-Gly-aminoethanethioate + 2-iminoacetate + 1-deoxy-D-xylulose 5-phosphate = [ThiS sulfur-carrier protein]-C-terminal Gly-Gly + 2-[(2R,5Z)-2-carboxy-4-methylthiazol-5(2H)-ylidene]ethyl phosphate + 2 H2O + H(+). The protein operates within cofactor biosynthesis; thiamine diphosphate biosynthesis. Functionally, catalyzes the rearrangement of 1-deoxy-D-xylulose 5-phosphate (DXP) to produce the thiazole phosphate moiety of thiamine. Sulfur is provided by the thiocarboxylate moiety of the carrier protein ThiS. In vitro, sulfur can be provided by H(2)S. This Bacillus anthracis protein is Thiazole synthase.